The following is an 88-amino-acid chain: Small ribosomal subunit protein bS16 (88 aa).

The protein belongs to the bacterial ribosomal protein bS16 family.

The sequence is that of Small ribosomal subunit protein bS16 from Mycoplasmopsis pulmonis (strain UAB CTIP) (Mycoplasma pulmonis).